Reading from the N-terminus, the 92-residue chain is Small ribosomal subunit protein uS19 (92 aa).

This sequence belongs to the universal ribosomal protein uS19 family. In terms of assembly, part of the 30S ribosomal subunit.

Protein S19 forms a complex with S13 that binds strongly to the 16S ribosomal RNA. The protein is Small ribosomal subunit protein uS19 (rpsS) of Bacillus subtilis (strain 168).